Consider the following 251-residue polypeptide: 1-(5-phosphoribosyl)-5-[(5-phosphoribosylamino)methylideneamino] imidazole-4-carboxamide isomerase (251 aa).

Aspartate 8 serves as the catalytic Proton acceptor. Residue aspartate 131 is the Proton donor of the active site.

Belongs to the HisA/HisF family.

Its subcellular location is the cytoplasm. It catalyses the reaction 1-(5-phospho-beta-D-ribosyl)-5-[(5-phospho-beta-D-ribosylamino)methylideneamino]imidazole-4-carboxamide = 5-[(5-phospho-1-deoxy-D-ribulos-1-ylimino)methylamino]-1-(5-phospho-beta-D-ribosyl)imidazole-4-carboxamide. Its pathway is amino-acid biosynthesis; L-histidine biosynthesis; L-histidine from 5-phospho-alpha-D-ribose 1-diphosphate: step 4/9. In Thiobacillus denitrificans (strain ATCC 25259 / T1), this protein is 1-(5-phosphoribosyl)-5-[(5-phosphoribosylamino)methylideneamino] imidazole-4-carboxamide isomerase.